The sequence spans 506 residues: 2,3-bisphosphoglycerate-independent phosphoglycerate mutase (506 aa).

Positions 9 and 59 each coordinate Mn(2+). The active-site Phosphoserine intermediate is Ser59. Residues His120, 149–150, Arg181, Arg187, 254–257, and Lys327 contribute to the substrate site; these read RD and RADR. Positions 394, 398, 435, 436, and 452 each coordinate Mn(2+).

Belongs to the BPG-independent phosphoglycerate mutase family. Requires Mn(2+) as cofactor.

The enzyme catalyses (2R)-2-phosphoglycerate = (2R)-3-phosphoglycerate. It participates in carbohydrate degradation; glycolysis; pyruvate from D-glyceraldehyde 3-phosphate: step 3/5. Its function is as follows. Catalyzes the interconversion of 2-phosphoglycerate and 3-phosphoglycerate. The polypeptide is 2,3-bisphosphoglycerate-independent phosphoglycerate mutase (Natronomonas pharaonis (strain ATCC 35678 / DSM 2160 / CIP 103997 / JCM 8858 / NBRC 14720 / NCIMB 2260 / Gabara) (Halobacterium pharaonis)).